A 269-amino-acid chain; its full sequence is Cytochrome c oxidase subunit 3 (269 aa).

The next 6 membrane-spanning stretches (helical) occupy residues 46–66, 90–110, 138–160, 167–187, 207–227, and 247–267; these read NSYY…AFWF, GVIL…WAFF, PLLN…HSLI, ALYG…FQGV, FGTG…AVAL, and ILYW…IYYW.

Belongs to the cytochrome c oxidase subunit 3 family. In terms of assembly, component of the cytochrome c oxidase (complex IV, CIV), a multisubunit enzyme composed of a catalytic core of 3 subunits and several supernumerary subunits. The complex exists as a monomer or a dimer and forms supercomplexes (SCs) in the inner mitochondrial membrane with ubiquinol-cytochrome c oxidoreductase (cytochrome b-c1 complex, complex III, CIII).

It localises to the mitochondrion inner membrane. It catalyses the reaction 4 Fe(II)-[cytochrome c] + O2 + 8 H(+)(in) = 4 Fe(III)-[cytochrome c] + 2 H2O + 4 H(+)(out). Its function is as follows. Component of the cytochrome c oxidase, the last enzyme in the mitochondrial electron transport chain which drives oxidative phosphorylation. The respiratory chain contains 3 multisubunit complexes succinate dehydrogenase (complex II, CII), ubiquinol-cytochrome c oxidoreductase (cytochrome b-c1 complex, complex III, CIII) and cytochrome c oxidase (complex IV, CIV), that cooperate to transfer electrons derived from NADH and succinate to molecular oxygen, creating an electrochemical gradient over the inner membrane that drives transmembrane transport and the ATP synthase. Cytochrome c oxidase is the component of the respiratory chain that catalyzes the reduction of oxygen to water. Electrons originating from reduced cytochrome c in the intermembrane space (IMS) are transferred via the dinuclear copper A center (CU(A)) of subunit 2 and heme A of subunit 1 to the active site in subunit 1, a binuclear center (BNC) formed by heme A3 and copper B (CU(B)). The BNC reduces molecular oxygen to 2 water molecules using 4 electrons from cytochrome c in the IMS and 4 protons from the mitochondrial matrix. The protein is Cytochrome c oxidase subunit 3 (COIII) of Podospora anserina (strain S / ATCC MYA-4624 / DSM 980 / FGSC 10383) (Pleurage anserina).